Reading from the N-terminus, the 837-residue chain is Protein translocase subunit SecA (837 aa).

Residues glutamine 85, glycine 103 to threonine 107, and aspartate 493 each bind ATP. Residues cysteine 821, cysteine 823, cysteine 832, and histidine 833 each contribute to the Zn(2+) site.

The protein belongs to the SecA family. As to quaternary structure, monomer and homodimer. Part of the essential Sec protein translocation apparatus which comprises SecA, SecYEG and auxiliary proteins SecDF. Other proteins may also be involved. The cofactor is Zn(2+).

It localises to the cell membrane. It is found in the cytoplasm. The enzyme catalyses ATP + H2O + cellular proteinSide 1 = ADP + phosphate + cellular proteinSide 2.. In terms of biological role, part of the Sec protein translocase complex. Interacts with the SecYEG preprotein conducting channel. Has a central role in coupling the hydrolysis of ATP to the transfer of proteins into and across the cell membrane, serving as an ATP-driven molecular motor driving the stepwise translocation of polypeptide chains across the membrane. The chain is Protein translocase subunit SecA from Streptococcus pneumoniae (strain Taiwan19F-14).